The sequence spans 228 residues: U1 small nuclear ribonucleoprotein C (228 aa).

A Matrin-type zinc finger spans residues 4–36 (YYCEYCDIYLTHSSPVGRRQHVQGRKHISAKIE). The span at 179–190 (LVKDNPNEERNG) shows a compositional bias: basic and acidic residues. Residues 179 to 228 (LVKDNPNEERNGDSAIANQPSTMHHEEDQDDPANATGGTANNNDNVSINA) form a disordered region. Residues 211-221 (ANATGGTANNN) are compositionally biased toward low complexity.

The protein belongs to the U1 small nuclear ribonucleoprotein C family. U1 snRNP is composed of the 7 core Sm proteins B/B', D1, D2, D3, E, F and G that assemble in a heptameric protein ring on the Sm site of the small nuclear RNA to form the core snRNP, and at least 3 U1 snRNP-specific proteins U1-70K, U1-A and U1-C. U1-C interacts with U1 snRNA and the 5' splice-site region of the pre-mRNA.

It is found in the nucleus. Its function is as follows. Component of the spliceosomal U1 snRNP, which is essential for recognition of the pre-mRNA 5' splice-site and the subsequent assembly of the spliceosome. U1-C is directly involved in initial 5' splice-site recognition for both constitutive and regulated alternative splicing. The interaction with the 5' splice-site seems to precede base-pairing between the pre-mRNA and the U1 snRNA. Stimulates commitment or early (E) complex formation by stabilizing the base pairing of the 5' end of the U1 snRNA and the 5' splice-site region. In Plasmodium knowlesi (strain H), this protein is U1 small nuclear ribonucleoprotein C.